The sequence spans 134 residues: Small ribosomal subunit protein uS8 (134 aa).

It belongs to the universal ribosomal protein uS8 family. Part of the 30S ribosomal subunit. Contacts proteins S5 and S12.

Functionally, one of the primary rRNA binding proteins, it binds directly to 16S rRNA central domain where it helps coordinate assembly of the platform of the 30S subunit. This is Small ribosomal subunit protein uS8 from Thermosipho melanesiensis (strain DSM 12029 / CIP 104789 / BI429).